The sequence spans 337 residues: MRVLGIETSCDETGIAIYDDEAGLLANQLYSQIKLHADYGGVVPELASRDHIRKTVPLIQAALKEAGLTCKDIDAVAYTAGPGLVGALLVGATIGRSLAFAWDVPAIPVHHMEGHLLAPMLEDNSPEFPFVALLVSGGHTQLISVTGIGKYELLGESIDDAAGEAFDKTAKLLGLDYPGGPVLSRMAQKGEVGRFVFPRPMTDRPGLDFSFSGLKTFASNTIHNNSDDEQTRADIARAFEDAVVDTLAIKCKRALEQTGFKRLVMAGGVSANRALRIKMEEVMAKLGGEVFYARPEFCTDNGAMIALAGMIRLKGEVNDSLGVIVKARWPLSELPPL.

Fe cation is bound by residues His-111 and His-115. Residues 134–138, Asp-167, Gly-180, and Asn-272 contribute to the substrate site; that span reads LVSGG. Fe cation is bound at residue Asp-300.

Belongs to the KAE1 / TsaD family. The cofactor is Fe(2+).

It is found in the cytoplasm. The catalysed reaction is L-threonylcarbamoyladenylate + adenosine(37) in tRNA = N(6)-L-threonylcarbamoyladenosine(37) in tRNA + AMP + H(+). In terms of biological role, required for the formation of a threonylcarbamoyl group on adenosine at position 37 (t(6)A37) in tRNAs that read codons beginning with adenine. Is involved in the transfer of the threonylcarbamoyl moiety of threonylcarbamoyl-AMP (TC-AMP) to the N6 group of A37, together with TsaE and TsaB. TsaD likely plays a direct catalytic role in this reaction. The protein is tRNA N6-adenosine threonylcarbamoyltransferase of Photorhabdus laumondii subsp. laumondii (strain DSM 15139 / CIP 105565 / TT01) (Photorhabdus luminescens subsp. laumondii).